Reading from the N-terminus, the 126-residue chain is Actin-depolymerizing factor (126 aa).

The ADF-H domain occupies 1-126; the sequence is EDNCKLKFLE…SFDIIKSRAL (126 aa).

Belongs to the actin-binding proteins ADF family. In terms of tissue distribution, preferentially in mature anther.

Functionally, actin-depolymerizing protein. Severs actin filaments (F-actin) and binds to actin monomers. This Brassica napus (Rape) protein is Actin-depolymerizing factor.